The primary structure comprises 628 residues: ATP-dependent zinc metalloprotease FtsH (628 aa).

At 1 to 7 (MKLSWKT) the chain is on the stromal side. A helical transmembrane segment spans residues 8-28 (LLLWSLPIFVVGFFFWQGFLG). Over 29–118 (PTTTDVGSNI…AHPPKSTSAV (90 aa)) the chain is Lumenal. A helical membrane pass occupies residues 119-139 (WGLLGNLLFPLILVGGLAFLF). The Stromal segment spans residues 140 to 628 (RRSNNASGGP…PEKNYYISQF (489 aa)). Residue 213 to 220 (GPPGTGKT) coordinates ATP. Position 434 (histidine 434) interacts with Zn(2+). Glutamate 435 is an active-site residue. 2 residues coordinate Zn(2+): histidine 438 and aspartate 512.

The protein in the central section; belongs to the AAA ATPase family. It in the C-terminal section; belongs to the peptidase M41 family. In terms of assembly, homohexamer. The cofactor is Zn(2+).

The protein localises to the plastid. It is found in the chloroplast thylakoid membrane. Its function is as follows. Acts as a processive, ATP-dependent zinc metallopeptidase. The sequence is that of ATP-dependent zinc metalloprotease FtsH from Porphyra purpurea (Red seaweed).